The sequence spans 523 residues: 2-isopropylmalate synthase (523 aa).

The 263-residue stretch at 5–267 (VIIFDTTLRD…HTRINHQEIW (263 aa)) folds into the Pyruvate carboxyltransferase domain. 4 residues coordinate Mn(2+): D14, H202, H204, and N238. Residues 392-523 (RLEYFSVQSG…QNKEHNQETV (132 aa)) are regulatory domain.

It belongs to the alpha-IPM synthase/homocitrate synthase family. LeuA type 1 subfamily. Homodimer. Requires Mn(2+) as cofactor.

It localises to the cytoplasm. It carries out the reaction 3-methyl-2-oxobutanoate + acetyl-CoA + H2O = (2S)-2-isopropylmalate + CoA + H(+). The protein operates within amino-acid biosynthesis; L-leucine biosynthesis; L-leucine from 3-methyl-2-oxobutanoate: step 1/4. Its function is as follows. Catalyzes the condensation of the acetyl group of acetyl-CoA with 3-methyl-2-oxobutanoate (2-ketoisovalerate) to form 3-carboxy-3-hydroxy-4-methylpentanoate (2-isopropylmalate). In Cronobacter sakazakii (strain ATCC BAA-894) (Enterobacter sakazakii), this protein is 2-isopropylmalate synthase.